Here is a 101-residue protein sequence, read N- to C-terminus: Protein S100-A3 (101 aa).

2 EF-hand domains span residues 12 to 47 (IVCT…TWTP) and 50 to 85 (FREC…LCLY). Residue Lys-26 coordinates Ca(2+). Cys-30 and Cys-68 are oxidised to a cystine. Arg-51 carries the citrulline; by PAD3 modification. Ca(2+) is bound by residues Asp-63, Asn-65, Asp-67, Glu-69, and Glu-74. Positions 83, 86, 87, and 93 each coordinate Zn(2+).

It belongs to the S-100 family. As to quaternary structure, homodimer and homotetramer for the citrullinated form. In terms of processing, more than half of the arginine residues undergo citrullination by PAD1 and PAD2. Arg-51 is specifically citrullinated by PAD3 and promotes tetramerization. In terms of tissue distribution, skin specific, specifically expressed in cuticle of pelage follicle.

It localises to the cytoplasm. Its function is as follows. Binds both calcium and zinc. May be involved in calcium-dependent cuticle cell differentiation, hair shaft and hair cuticular barrier formation. This Mus musculus (Mouse) protein is Protein S100-A3 (S100a3).